A 373-amino-acid chain; its full sequence is Meiosis-specific kinetochore protein (373 aa).

2 disordered regions span residues 1-91 (MWPL…QDEK) and 250-276 (STPE…LTST). Basic and acidic residues predominate over residues 77-91 (SLQENRSSEDTQDEK). The POLO box domain (PBD)-binding motif lies at 275 to 277 (STP). Residues 332–335 (EICC) form a required for localization to kinetochores region.

Interacts with CENPC. Interacts with PLK1; required for recruitment of PLK1 at kinetochores.

Its subcellular location is the chromosome. The protein localises to the centromere. The protein resides in the kinetochore. Functionally, key regulator of kinetochore function during meiosis I: required both for mono-orientation of kinetochores on sister chromosomes and protection of centromeric cohesin from separase-mediated cleavage. Acts by facilitating kinetochore mono-orientation during meiosis I, when kinetochores on sister chromosomes face the same direction and are thus captured and pulled by spindle fibers from the same pole. Also required to prevent cleavage of cohesin at centromeres during meiosis I, possibly by acting as a regulator of the shugoshin-dependent protection pathway. Acts in collaboration with PLK1: required for PLK1 enrichment to kinetochores. Not required during meiosis II or mitosis. This Homo sapiens (Human) protein is Meiosis-specific kinetochore protein.